The chain runs to 414 residues: Serine hydroxymethyltransferase (414 aa).

(6S)-5,6,7,8-tetrahydrofolate-binding positions include leucine 121 and 125–127 (GHL). Residue lysine 229 is modified to N6-(pyridoxal phosphate)lysine.

This sequence belongs to the SHMT family. Homodimer. The cofactor is pyridoxal 5'-phosphate.

It is found in the cytoplasm. The enzyme catalyses (6R)-5,10-methylene-5,6,7,8-tetrahydrofolate + glycine + H2O = (6S)-5,6,7,8-tetrahydrofolate + L-serine. Its pathway is one-carbon metabolism; tetrahydrofolate interconversion. It participates in amino-acid biosynthesis; glycine biosynthesis; glycine from L-serine: step 1/1. Its function is as follows. Catalyzes the reversible interconversion of serine and glycine with tetrahydrofolate (THF) serving as the one-carbon carrier. This reaction serves as the major source of one-carbon groups required for the biosynthesis of purines, thymidylate, methionine, and other important biomolecules. Also exhibits THF-independent aldolase activity toward beta-hydroxyamino acids, producing glycine and aldehydes, via a retro-aldol mechanism. This chain is Serine hydroxymethyltransferase, found in Albidiferax ferrireducens (strain ATCC BAA-621 / DSM 15236 / T118) (Rhodoferax ferrireducens).